We begin with the raw amino-acid sequence, 158 residues long: Transcription elongation factor GreA (158 aa).

The protein belongs to the GreA/GreB family.

Functionally, necessary for efficient RNA polymerase transcription elongation past template-encoded arresting sites. The arresting sites in DNA have the property of trapping a certain fraction of elongating RNA polymerases that pass through, resulting in locked ternary complexes. Cleavage of the nascent transcript by cleavage factors such as GreA or GreB allows the resumption of elongation from the new 3'terminus. GreA releases sequences of 2 to 3 nucleotides. This Agrobacterium fabrum (strain C58 / ATCC 33970) (Agrobacterium tumefaciens (strain C58)) protein is Transcription elongation factor GreA.